A 73-amino-acid chain; its full sequence is Large ribosomal subunit protein uL30 (73 aa).

It belongs to the universal ribosomal protein uL30 family. In terms of assembly, part of the 50S ribosomal subunit.

The polypeptide is Large ribosomal subunit protein uL30 (Borrelia hermsii (strain HS1 / DAH)).